We begin with the raw amino-acid sequence, 348 residues long: MHMNRINIRDMSLEEIESFISSLGKEKYRARQIMKWLYSQGAKSFDEMTTLSRAVRDQLNEMACITLPEIARVQQSSDGTRKILFRLQDNSFIESVLIPGKHNWTACISTQVGCHMGCRFCFTARQGFRRNLKPSEITGQLTMLQFYLPEGPEIKNIVMMGMGEPLANYRNTLKAIRIITSDYGLGFSTRKITLSTSGITPMIEQLGRDLCINLAISLNAPTDSIRSELMPVNRKYPLDRLLQACRNYPMPGRRMLTFEYILIDGVNSSPAHAEMLCRLLKGIRCKLNLIRFNEFPDCPFKTPSEETVLAFQQILVKHHYTAIIRASRGRDILAACGQLSGKALEEKL.

Glutamate 94 serves as the catalytic Proton acceptor. The region spanning glycine 100 to arginine 330 is the Radical SAM core domain. An intrachain disulfide couples cysteine 107 to cysteine 336. Cysteine 114, cysteine 118, and cysteine 121 together coordinate [4Fe-4S] cluster. S-adenosyl-L-methionine is bound by residues glycine 163 to glutamate 164, serine 195, serine 217 to asparagine 219, and asparagine 293. Residue cysteine 336 is the S-methylcysteine intermediate of the active site.

This sequence belongs to the radical SAM superfamily. RlmN family. [4Fe-4S] cluster serves as cofactor.

Its subcellular location is the cytoplasm. The enzyme catalyses adenosine(2503) in 23S rRNA + 2 reduced [2Fe-2S]-[ferredoxin] + 2 S-adenosyl-L-methionine = 2-methyladenosine(2503) in 23S rRNA + 5'-deoxyadenosine + L-methionine + 2 oxidized [2Fe-2S]-[ferredoxin] + S-adenosyl-L-homocysteine. The catalysed reaction is adenosine(37) in tRNA + 2 reduced [2Fe-2S]-[ferredoxin] + 2 S-adenosyl-L-methionine = 2-methyladenosine(37) in tRNA + 5'-deoxyadenosine + L-methionine + 2 oxidized [2Fe-2S]-[ferredoxin] + S-adenosyl-L-homocysteine. Functionally, specifically methylates position 2 of adenine 2503 in 23S rRNA and position 2 of adenine 37 in tRNAs. m2A2503 modification seems to play a crucial role in the proofreading step occurring at the peptidyl transferase center and thus would serve to optimize ribosomal fidelity. The protein is Dual-specificity RNA methyltransferase RlmN of Syntrophus aciditrophicus (strain SB).